Consider the following 380-residue polypeptide: Type 4 apparatus protein DotM (380 aa).

Helical transmembrane passes span 18 to 38 (MAPV…WALA) and 99 to 119 (YPVI…NVTL).

As to quaternary structure, the T4BSS is a complex nanomachine composed of several subcomplexes. This subunit is part of the Type IV Coupling Complex (T4CC), a subcomplex composed of the DotLMNYZ core and the IcmSW-LvgA adapter subunits, linked by the C-terminal tail of DotL. Six DotLMNYZ hetero-pentameric units may assemble into a hexameric nanomachine, forming an inner membrane channel for effectors to pass through. Interacts directly with DotL.

The protein resides in the cell inner membrane. Functionally, component of the Dot/Icm type IVB secretion system (T4BSS), which is used to inject bacterial effector proteins into eukaryotic host cells. Part of a subcomplex which recruits effector proteins and delivers them to the core transmembrane subcomplex. Forms the interacting surface for recruitment of acidic Glu-rich motif-containing effectors. The sequence is that of Type 4 apparatus protein DotM from Legionella pneumophila subsp. pneumophila (strain Philadelphia 1 / ATCC 33152 / DSM 7513).